The following is a 124-amino-acid chain: Small ribosomal subunit protein uS12 (124 aa).

Asp-89 bears the 3-methylthioaspartic acid mark.

This sequence belongs to the universal ribosomal protein uS12 family. As to quaternary structure, part of the 30S ribosomal subunit. Contacts proteins S8 and S17. May interact with IF1 in the 30S initiation complex.

Functionally, with S4 and S5 plays an important role in translational accuracy. Interacts with and stabilizes bases of the 16S rRNA that are involved in tRNA selection in the A site and with the mRNA backbone. Located at the interface of the 30S and 50S subunits, it traverses the body of the 30S subunit contacting proteins on the other side and probably holding the rRNA structure together. The combined cluster of proteins S8, S12 and S17 appears to hold together the shoulder and platform of the 30S subunit. This chain is Small ribosomal subunit protein uS12, found in Pectobacterium atrosepticum (strain SCRI 1043 / ATCC BAA-672) (Erwinia carotovora subsp. atroseptica).